The sequence spans 554 residues: Glutamine--tRNA ligase (554 aa).

Residues 34 to 44 (PEPNGYLHIGH) carry the 'HIGH' region motif. Residues 35 to 37 (EPN) and 41 to 47 (HIGHAKS) each bind ATP. 2 residues coordinate L-glutamine: Asp-67 and Tyr-212. ATP contacts are provided by residues Thr-231, 261–262 (RL), and 269–271 (MSK). Residues 268–272 (IMSKR) carry the 'KMSKS' region motif.

It belongs to the class-I aminoacyl-tRNA synthetase family. Monomer.

The protein localises to the cytoplasm. It carries out the reaction tRNA(Gln) + L-glutamine + ATP = L-glutaminyl-tRNA(Gln) + AMP + diphosphate. This chain is Glutamine--tRNA ligase, found in Serratia proteamaculans (strain 568).